A 397-amino-acid polypeptide reads, in one-letter code: NADH-quinone oxidoreductase subunit H (397 aa).

Helical transmembrane passes span 7–27, 78–98, 120–140, 164–184, 195–215, 247–267, 283–303, 322–342, and 353–373; these read ALLI…TAFA, LVYT…FGGI, ILAL…GGWA, MGLS…LDIV, WLIL…FAEV, MAEY…FFGG, SWPL…FIWV, LTLP…AFVP, and WLLG…SDAV.

Belongs to the complex I subunit 1 family. NDH-1 is composed of 15 different subunits. Subunits NuoA, H, J, K, L, M, N constitute the membrane sector of the complex.

The protein localises to the cell membrane. The enzyme catalyses a quinone + NADH + 5 H(+)(in) = a quinol + NAD(+) + 4 H(+)(out). Its function is as follows. NDH-1 shuttles electrons from NADH, via FMN and iron-sulfur (Fe-S) centers, to quinones in the respiratory chain. The immediate electron acceptor for the enzyme in this species is believed to be ubiquinone. Couples the redox reaction to proton translocation (for every two electrons transferred, four hydrogen ions are translocated across the cytoplasmic membrane), and thus conserves the redox energy in a proton gradient. This subunit may bind ubiquinone. This Deinococcus radiodurans (strain ATCC 13939 / DSM 20539 / JCM 16871 / CCUG 27074 / LMG 4051 / NBRC 15346 / NCIMB 9279 / VKM B-1422 / R1) protein is NADH-quinone oxidoreductase subunit H.